Consider the following 122-residue polypeptide: Succinate dehydrogenase assembly factor 3, mitochondrial (122 aa).

Residues 1-47 (MHPSVVRLVKPRRPERITSPILPPLPLYRAILRAHHRKLPQELRYLG) constitute a mitochondrion transit peptide.

The protein belongs to the complex I LYR family. SDHAF3 subfamily. As to quaternary structure, interacts with the iron-sulfur protein subunit within the SDH catalytic dimer.

The protein resides in the mitochondrion matrix. Plays an essential role in the assembly of succinate dehydrogenase (SDH), an enzyme complex (also referred to as respiratory complex II) that is a component of both the tricarboxylic acid (TCA) cycle and the mitochondrial electron transport chain, and which couples the oxidation of succinate to fumarate with the reduction of ubiquinone (coenzyme Q) to ubiquinol. Promotes maturation of the iron-sulfur protein subunit of the SDH catalytic dimer, protecting it from the deleterious effects of oxidants. May act together with SDHAF1. The sequence is that of Succinate dehydrogenase assembly factor 3, mitochondrial from Candida albicans (strain SC5314 / ATCC MYA-2876) (Yeast).